Here is a 151-residue protein sequence, read N- to C-terminus: Small ribosomal subunit protein uS15y (151 aa).

This sequence belongs to the universal ribosomal protein uS15 family.

The polypeptide is Small ribosomal subunit protein uS15y (RPS13B) (Arabidopsis thaliana (Mouse-ear cress)).